We begin with the raw amino-acid sequence, 156 residues long: Small ribosomal subunit protein uS7 (156 aa).

It belongs to the universal ribosomal protein uS7 family. As to quaternary structure, part of the 30S ribosomal subunit. Contacts proteins S9 and S11.

Its function is as follows. One of the primary rRNA binding proteins, it binds directly to 16S rRNA where it nucleates assembly of the head domain of the 30S subunit. Is located at the subunit interface close to the decoding center, probably blocks exit of the E-site tRNA. This Rhizorhabdus wittichii (strain DSM 6014 / CCUG 31198 / JCM 15750 / NBRC 105917 / EY 4224 / RW1) (Sphingomonas wittichii) protein is Small ribosomal subunit protein uS7.